A 200-amino-acid polypeptide reads, in one-letter code: Proteasome subunit beta 2 (200 aa).

The propeptide at M1–G7 is removed in mature form; by autocatalysis. The Nucleophile role is filled by T8.

It belongs to the peptidase T1B family. As to quaternary structure, the 20S proteasome core is composed of 14 alpha and 14 beta subunits that assemble into four stacked heptameric rings, resulting in a barrel-shaped structure. The two inner rings, each composed of seven catalytic beta subunits, are sandwiched by two outer rings, each composed of seven alpha subunits. The catalytic chamber with the active sites is on the inside of the barrel. Has a gated structure, the ends of the cylinder being occluded by the N-termini of the alpha-subunits. Is capped at one or both ends by the proteasome regulatory ATPase, PAN.

Its subcellular location is the cytoplasm. It catalyses the reaction Cleavage of peptide bonds with very broad specificity.. The formation of the proteasomal ATPase PAN-20S proteasome complex, via the docking of the C-termini of PAN into the intersubunit pockets in the alpha-rings, triggers opening of the gate for substrate entry. Interconversion between the open-gate and close-gate conformations leads to a dynamic regulation of the 20S proteasome proteolysis activity. Functionally, component of the proteasome core, a large protease complex with broad specificity involved in protein degradation. This is Proteasome subunit beta 2 from Thermococcus gammatolerans (strain DSM 15229 / JCM 11827 / EJ3).